The sequence spans 231 residues: 2-C-methyl-D-erythritol 4-phosphate cytidylyltransferase (231 aa).

It belongs to the IspD/TarI cytidylyltransferase family. IspD subfamily.

It catalyses the reaction 2-C-methyl-D-erythritol 4-phosphate + CTP + H(+) = 4-CDP-2-C-methyl-D-erythritol + diphosphate. It participates in isoprenoid biosynthesis; isopentenyl diphosphate biosynthesis via DXP pathway; isopentenyl diphosphate from 1-deoxy-D-xylulose 5-phosphate: step 2/6. Functionally, catalyzes the formation of 4-diphosphocytidyl-2-C-methyl-D-erythritol from CTP and 2-C-methyl-D-erythritol 4-phosphate (MEP). In Rubrobacter xylanophilus (strain DSM 9941 / JCM 11954 / NBRC 16129 / PRD-1), this protein is 2-C-methyl-D-erythritol 4-phosphate cytidylyltransferase.